The sequence spans 227 residues: UPF0758 protein CPF_2399 (227 aa).

Residues Lys105–Leu227 enclose the MPN domain. The Zn(2+) site is built by His176, His178, and Asp189. The JAMM motif motif lies at His176–Asp189.

The protein belongs to the UPF0758 family.

This Clostridium perfringens (strain ATCC 13124 / DSM 756 / JCM 1290 / NCIMB 6125 / NCTC 8237 / Type A) protein is UPF0758 protein CPF_2399.